The primary structure comprises 165 residues: Crossover junction endodeoxyribonuclease RuvC (165 aa).

Catalysis depends on residues Asp8, Glu66, and Asp138. Mg(2+)-binding residues include Asp8, Glu66, and Asp138.

It belongs to the RuvC family. Homodimer which binds Holliday junction (HJ) DNA. The HJ becomes 2-fold symmetrical on binding to RuvC with unstacked arms; it has a different conformation from HJ DNA in complex with RuvA. In the full resolvosome a probable DNA-RuvA(4)-RuvB(12)-RuvC(2) complex forms which resolves the HJ. Requires Mg(2+) as cofactor.

The protein localises to the cytoplasm. It catalyses the reaction Endonucleolytic cleavage at a junction such as a reciprocal single-stranded crossover between two homologous DNA duplexes (Holliday junction).. Its function is as follows. The RuvA-RuvB-RuvC complex processes Holliday junction (HJ) DNA during genetic recombination and DNA repair. Endonuclease that resolves HJ intermediates. Cleaves cruciform DNA by making single-stranded nicks across the HJ at symmetrical positions within the homologous arms, yielding a 5'-phosphate and a 3'-hydroxyl group; requires a central core of homology in the junction. The consensus cleavage sequence is 5'-(A/T)TT(C/G)-3'. Cleavage occurs on the 3'-side of the TT dinucleotide at the point of strand exchange. HJ branch migration catalyzed by RuvA-RuvB allows RuvC to scan DNA until it finds its consensus sequence, where it cleaves and resolves the cruciform DNA. This is Crossover junction endodeoxyribonuclease RuvC from Methylococcus capsulatus (strain ATCC 33009 / NCIMB 11132 / Bath).